Consider the following 358-residue polypeptide: Probable anti-sigma-M factor YhdL (358 aa).

The chain crosses the membrane as a helical span at residues 74–96 (ISVLAVISTLMILPLCTLGSYLY).

In terms of assembly, the N-terminus of YhdL interacts with sigma-M. YhdL interacts specifically with YhdK.

It localises to the membrane. This Bacillus subtilis (strain 168) protein is Probable anti-sigma-M factor YhdL (yhdL).